The sequence spans 631 residues: Glutamyl-tRNA(Gln) amidotransferase subunit E (631 aa).

The protein belongs to the GatB/GatE family. GatE subfamily. As to quaternary structure, heterodimer of GatD and GatE.

The catalysed reaction is L-glutamyl-tRNA(Gln) + L-glutamine + ATP + H2O = L-glutaminyl-tRNA(Gln) + L-glutamate + ADP + phosphate + H(+). In terms of biological role, allows the formation of correctly charged Gln-tRNA(Gln) through the transamidation of misacylated Glu-tRNA(Gln) in organisms which lack glutaminyl-tRNA synthetase. The reaction takes place in the presence of glutamine and ATP through an activated gamma-phospho-Glu-tRNA(Gln). The GatDE system is specific for glutamate and does not act on aspartate. This Methanococcus maripaludis (strain DSM 14266 / JCM 13030 / NBRC 101832 / S2 / LL) protein is Glutamyl-tRNA(Gln) amidotransferase subunit E.